The primary structure comprises 348 residues: Mamu class I histocompatibility antigen, alpha chain F (348 aa).

The first 21 residues, 1 to 21 (MAPRTLLLVLSGALALTETWA), serve as a signal peptide directing secretion. Positions 22 to 113 (GSHSLRYFST…LLLRYNQSEA (92 aa)) are alpha-1. At 22-307 (GSHSLRYFST…ESSSQPTIPI (286 aa)) the chain is on the extracellular side. The N-linked (GlcNAc...) asparagine glycan is linked to asparagine 109. The interval 114–205 (GSHTLQGMNG…ENGKETLQRA (92 aa)) is alpha-2. 2 disulfide bridges follow: cysteine 124–cysteine 187 and cysteine 226–cysteine 282. Residues 206 to 297 (DPPKAHVAHH…GLPQPLTLRW (92 aa)) are alpha-3. Residues 208–296 (PKAHVAHHPI…EGLPQPLTLR (89 aa)) enclose the Ig-like C1-type domain. Residues 298-307 (ESSSQPTIPI) are connecting peptide. A helical membrane pass occupies residues 308–331 (VGIVAGLAVLAVVVTGAVVAAVMW). Over 332 to 348 (RRKSSDRNRGSYSQPTM) the chain is Cytoplasmic.

Belongs to the MHC class I family. Heterodimer of an alpha chain and a beta chain (beta-2-microglobulin).

Its subcellular location is the membrane. Functionally, involved in the presentation of foreign antigens to the immune system. In Macaca mulatta (Rhesus macaque), this protein is Mamu class I histocompatibility antigen, alpha chain F (Mamu-F).